A 557-amino-acid polypeptide reads, in one-letter code: Chaperonin GroEL 1 (557 aa).

ATP-binding positions include 29–32 (TLGP), Lys50, 86–90 (DGTTT), Gly416, and Asp495.

This sequence belongs to the chaperonin (HSP60) family. Forms a cylinder of 14 subunits composed of two heptameric rings stacked back-to-back. Interacts with the co-chaperonin GroES.

It localises to the cytoplasm. It carries out the reaction ATP + H2O + a folded polypeptide = ADP + phosphate + an unfolded polypeptide.. In terms of biological role, together with its co-chaperonin GroES, plays an essential role in assisting protein folding. The GroEL-GroES system forms a nano-cage that allows encapsulation of the non-native substrate proteins and provides a physical environment optimized to promote and accelerate protein folding. The polypeptide is Chaperonin GroEL 1 (Protochlamydia amoebophila (strain UWE25)).